The primary structure comprises 456 residues: MPYIPHTPDDTKEMLEAIGAQDIQDLFDEIPASLQYAGFQNIPAGINEMEMLKEAQNQAQKNRNGICFIGAGCYEHHIPAAVWDIASRGEFLTAYTPYQAEASQGTLQLLYEYQTMICELTGMEVSNASMYDGATALAEAVLMAVRLNKHSKTNRVLIAGTVHPFYRETIETIVRNQHIEVITLPFDEQQGITNLGSLNQYTGEDITALVIAQPNFFGCLEQVDKMTSWAHHNKTISVACVNPTSLALLKPPGSWGEHGVDIVCGEGQPLGSPMASGGPYFGFLSTRMAHVRQMPGRIIGRTVDKDGKTGFSLTLQAREQHIRRAKATSNICTNQGLLVTAATIYMSLLGPEGLSQVATQCHQNTHELITALTQIEGVELAFKAPFFHEALIKLNQPVQSVLQQLADAGIAGGYAPEQHYPQLANTLLVCATEVRTAEDIAKYAKTLKTIMSKRGA.

It belongs to the GcvP family. N-terminal subunit subfamily. The glycine cleavage system is composed of four proteins: P, T, L and H. In this organism, the P 'protein' is a heterodimer of two subunits.

It catalyses the reaction N(6)-[(R)-lipoyl]-L-lysyl-[glycine-cleavage complex H protein] + glycine + H(+) = N(6)-[(R)-S(8)-aminomethyldihydrolipoyl]-L-lysyl-[glycine-cleavage complex H protein] + CO2. Functionally, the glycine cleavage system catalyzes the degradation of glycine. The P protein binds the alpha-amino group of glycine through its pyridoxal phosphate cofactor; CO(2) is released and the remaining methylamine moiety is then transferred to the lipoamide cofactor of the H protein. The chain is Probable glycine dehydrogenase (decarboxylating) subunit 1 from Legionella pneumophila subsp. pneumophila (strain Philadelphia 1 / ATCC 33152 / DSM 7513).